We begin with the raw amino-acid sequence, 179 residues long: 3-hydroxyanthranilate 3,4-dioxygenase (179 aa).

Residue Arg47 participates in O2 binding. Fe cation-binding residues include His51, Glu57, and His96. A substrate-binding site is contributed by Glu57. 2 residues coordinate substrate: Arg100 and Glu110. Residues Cys125, Cys128, Cys162, and Cys165 each contribute to the Fe cation site.

This sequence belongs to the 3-HAO family. Requires Fe(2+) as cofactor.

It carries out the reaction 3-hydroxyanthranilate + O2 = (2Z,4Z)-2-amino-3-carboxymuconate 6-semialdehyde. It functions in the pathway cofactor biosynthesis; NAD(+) biosynthesis; quinolinate from L-kynurenine: step 3/3. Its function is as follows. Catalyzes the oxidative ring opening of 3-hydroxyanthranilate to 2-amino-3-carboxymuconate semialdehyde, which spontaneously cyclizes to quinolinate. The polypeptide is 3-hydroxyanthranilate 3,4-dioxygenase (Bacillus cereus (strain ATCC 10987 / NRS 248)).